Reading from the N-terminus, the 365-residue chain is Phospho-N-acetylmuramoyl-pentapeptide-transferase (365 aa).

The next 10 membrane-spanning stretches (helical) occupy residues 22–42 (YISV…LALG), 74–94 (TMGG…WGDL), 95–115 (TSIY…IGFF), 134–154 (KFAL…YLLS), 168–188 (SLYI…IING), 201–221 (GLAI…AYIE), 240–260 (LAEV…FLWF), 267–287 (VFMG…IAVM), 292–312 (LIFF…MLQV), and 342–362 (KVVI…LAAI).

This sequence belongs to the glycosyltransferase 4 family. MraY subfamily. Mg(2+) serves as cofactor.

Its subcellular location is the cell inner membrane. It carries out the reaction UDP-N-acetyl-alpha-D-muramoyl-L-alanyl-gamma-D-glutamyl-meso-2,6-diaminopimeloyl-D-alanyl-D-alanine + di-trans,octa-cis-undecaprenyl phosphate = di-trans,octa-cis-undecaprenyl diphospho-N-acetyl-alpha-D-muramoyl-L-alanyl-D-glutamyl-meso-2,6-diaminopimeloyl-D-alanyl-D-alanine + UMP. It participates in cell wall biogenesis; peptidoglycan biosynthesis. Catalyzes the initial step of the lipid cycle reactions in the biosynthesis of the cell wall peptidoglycan: transfers peptidoglycan precursor phospho-MurNAc-pentapeptide from UDP-MurNAc-pentapeptide onto the lipid carrier undecaprenyl phosphate, yielding undecaprenyl-pyrophosphoryl-MurNAc-pentapeptide, known as lipid I. In Francisella tularensis subsp. mediasiatica (strain FSC147), this protein is Phospho-N-acetylmuramoyl-pentapeptide-transferase.